We begin with the raw amino-acid sequence, 131 residues long: Small ribosomal subunit protein uS8 (131 aa).

This sequence belongs to the universal ribosomal protein uS8 family. In terms of assembly, part of the 30S ribosomal subunit. Contacts proteins S5 and S12.

Its function is as follows. One of the primary rRNA binding proteins, it binds directly to 16S rRNA central domain where it helps coordinate assembly of the platform of the 30S subunit. The sequence is that of Small ribosomal subunit protein uS8 from Dictyoglomus turgidum (strain DSM 6724 / Z-1310).